The sequence spans 403 residues: Ubiquitin-like modifier-activating enzyme 5 (403 aa).

Residues glycine 81, aspartate 102, lysine 125, asparagine 148, and asparagine 182 each coordinate ATP. Zn(2+) contacts are provided by cysteine 224 and cysteine 227. The active-site Glycyl thioester intermediate is the cysteine 248. Zn(2+)-binding residues include cysteine 301 and cysteine 306. A compositionally biased stretch (basic and acidic residues) spans 306–315; sequence CRKQQEEYKK. The interval 306–337 is disordered; sequence CRKQQEEYKKRAPAQPTQETAPQEEEEVVHED. Residues 333–345 carry the UFM1-interacting sequence (UIS) motif; it reads VVHEDNEWGIELV. Residues 346 to 376 form a linker region; sequence SEVSEEELKNSSGPVPTLPEGITVAYTVPKK. Phosphoserine is present on residues serine 357 and serine 392. A UFC1-binding sequence (UFC) motif is present at residues 388-403; it reads DSGESLEDLMARMKKM.

It belongs to the ubiquitin-activating E1 family. UBA5 subfamily. Homodimer; homodimerization is required for UFM1 activation. Interacts (via UIS motif) with UFM1; binds UFM1 via a trans-binding mechanism in which UFM1 interacts with distinct sites in both subunits of the UBA5 homodimer. Interacts (via C-terminus) with UFC1. Interacts (via UIS motif) with GABARAPL2 and, with lower affinity, with GABARAP and GABARAPL1.

Its subcellular location is the cytoplasm. It is found in the nucleus. The protein localises to the endoplasmic reticulum membrane. The protein resides in the golgi apparatus. E1-like enzyme which specifically catalyzes the first step in ufmylation. Activates UFM1 by first adenylating its C-terminal glycine residue with ATP, and thereafter linking this residue to the side chain of a cysteine residue in E1, yielding a UFM1-E1 thioester and free AMP. Activates UFM1 via a trans-binding mechanism, in which UFM1 interacts with distinct sites in both subunits of the UBA5 homodimer. Trans-binding also promotes stabilization of the UBA5 homodimer, and enhances ATP-binding. Transfer of UFM1 from UBA5 to the E2-like enzyme UFC1 also takes place using a trans mechanism. Ufmylation plays a key role in various processes, such as ribosome recycling, response to DNA damage, interferon response or reticulophagy (also called ER-phagy). Ufmylation is essential for erythroid differentiation of both megakaryocytes and erythrocytes. This Rattus norvegicus (Rat) protein is Ubiquitin-like modifier-activating enzyme 5.